The chain runs to 394 residues: Maltose permease (394 aa).

Residues Met-1 to Ala-11 lie on the Cytoplasmic side of the membrane. A helical membrane pass occupies residues Arg-12–Leu-38. Residues Gln-39–Ser-45 lie on the Extracellular side of the membrane. A helical membrane pass occupies residues Gly-46–Thr-74. The Cytoplasmic portion of the chain corresponds to Arg-75 to Val-78. The chain crosses the membrane as a helical span at residues Gly-79 to Phe-104. The Extracellular portion of the chain corresponds to Val-105–Thr-108. Residues Val-109–Ala-126 form a helical membrane-spanning segment. Residues Leu-127–Tyr-137 lie on the Cytoplasmic side of the membrane. A helical membrane pass occupies residues Gly-138–Asp-160. The Extracellular segment spans residues His-161–Ala-163. Residues Phe-164 to Thr-183 traverse the membrane as a helical segment. Over Arg-184–Leu-213 the chain is Cytoplasmic. A helical transmembrane segment spans residues Leu-214–Leu-233. The Extracellular portion of the chain corresponds to Leu-234–Glu-237. A helical membrane pass occupies residues Leu-238 to Ala-262. Residues Ala-263–Met-272 are Cytoplasmic-facing. The chain crosses the membrane as a helical span at residues Val-273–Ala-292. Residues Asp-293 to Pro-295 are Extracellular-facing. Residues Leu-296–Leu-318 form a helical membrane-spanning segment. Residues Gln-319–Gln-330 are Cytoplasmic-facing. Residues Ser-331–Glu-358 form a helical membrane-spanning segment. The Extracellular segment spans residues Arg-359–Gln-361. Residues Ile-362 to Leu-382 form a helical membrane-spanning segment. At Leu-383–Lys-394 the chain is on the cytoplasmic side.

It belongs to the major facilitator superfamily.

Its subcellular location is the cell membrane. Functionally, high affinity transport of maltose. The protein is Maltose permease (malA) of Geobacillus stearothermophilus (Bacillus stearothermophilus).